We begin with the raw amino-acid sequence, 124 residues long: Small ribosomal subunit protein uS12 (124 aa).

3-methylthioaspartic acid is present on aspartate 89.

Belongs to the universal ribosomal protein uS12 family. Part of the 30S ribosomal subunit. Contacts proteins S8 and S17. May interact with IF1 in the 30S initiation complex.

With S4 and S5 plays an important role in translational accuracy. In terms of biological role, interacts with and stabilizes bases of the 16S rRNA that are involved in tRNA selection in the A site and with the mRNA backbone. Located at the interface of the 30S and 50S subunits, it traverses the body of the 30S subunit contacting proteins on the other side and probably holding the rRNA structure together. The combined cluster of proteins S8, S12 and S17 appears to hold together the shoulder and platform of the 30S subunit. The chain is Small ribosomal subunit protein uS12 from Mannheimia succiniciproducens (strain KCTC 0769BP / MBEL55E).